A 314-amino-acid polypeptide reads, in one-letter code: NF-kappa-B inhibitor alpha (314 aa).

Residues 1-40 form a disordered region; it reads MFQPAGHGQDWAMEGPRDGLKKERLVDDRHDSGLDSMKDE. The segment covering 15–40 has biased composition (basic and acidic residues); the sequence is GPRDGLKKERLVDDRHDSGLDSMKDE. Residue K21 forms a Glycyl lysine isopeptide (Lys-Gly) (interchain with G-Cter in SUMO); alternate linkage. K21 participates in a covalent cross-link: Glycyl lysine isopeptide (Lys-Gly) (interchain with G-Cter in ubiquitin); alternate. Residue K22 forms a Glycyl lysine isopeptide (Lys-Gly) (interchain with G-Cter in ubiquitin) linkage. A Destruction motif motif is present at residues 30–36; that stretch reads HDSGLDS. Residue S32 is modified to Phosphoserine; by IKKB. Position 36 is a phosphoserine; by IKKA, IKKB, IKKE and TBK1 (S36). At Y42 the chain carries Phosphotyrosine. The short motif at 45–54 is the Nuclear export signal element; it reads MVKELREIRL. ANK repeat units follow at residues 73–103, 110–139, 143–172, 182–211, and 216–245; these read DGDS…DLAF, LQQT…DPEL, RGNT…PQHL, NGHT…DVNA, and NGRT…DVNR. Residues 110–120 carry the Nuclear import signal motif; sequence LQQTPLHLAVI. (3S)-3-hydroxyasparagine; by HIF1AN occurs at positions 210 and 244. Phosphoserine; by CK2 occurs at positions 283 and 288. Phosphothreonine; by CK2 is present on T291. S293 carries the phosphoserine; by CK2 modification. T296 is subject to Phosphothreonine.

The protein belongs to the NF-kappa-B inhibitor family. Interacts with RELA; the interaction requires the nuclear import signal. Part of a 70-90 kDa complex at least consisting of CHUK, IKBKB, NFKBIA, RELA, ELP1 and MAP3K14. Interacts with NKIRAS1 and NKIRAS2. Interacts with RWDD3; the interaction enhances sumoylation. Interacts with PRMT2. Interacts with PRKACA in platelets; this interaction is disrupted by thrombin and collagen. Interacts with MEFV. Interacts with DDRGK1; positively regulates NFKBIA phosphorylation and degradation. Interacts with HNRNPA2B1; the interaction may be mediated by the RRM2 domain of HNRNPA2B1, and HNRNPA2B1 may interact simultaneously with FAM76B and either NFKBIA or NFKBIE to form a complex. Post-translationally, phosphorylated at Ser-32 and Ser-36 by IKKA/CHUK and IKKB/IKBKB; disables inhibition of NF-kappa-B DNA-binding activity. Phosphorylation at positions 32 and 36 is prerequisite to recognition by the SCF(FBXW11) and SCF(BTRC) complexes, leading to polyubiquitination and subsequent degradation. In terms of processing, polyubiquitinated at Lys-21 and/or Lys-22 following phosphorylation at Ser-32 and Ser-36. Monoubiquitinated at Lys-21 and/or Lys-22 by UBE2D3. Ubiquitin chain elongation is then performed by CDC34 in cooperation with the SCF(FBXW11) E3 ligase complex, building ubiquitin chains from the UBE2D3-primed NFKBIA-linked ubiquitin. The resulting polyubiquitination leads to protein degradation. Also ubiquitinated by the SCF(BTRC) complex following stimulus-dependent phosphorylation at Ser-32 and Ser-36. Deubiquitinated by USP38, leading to NF-kappa-B inhibition. Sumoylated; sumoylation requires the presence of the nuclear import signal. Sumoylation blocks ubiquitination and proteasome-mediated degradation of the protein thereby increasing the protein stability. Post-translationally, hydroxylated by HIF1AN. Highly expressed in lymph node, thymus followed by liver, brain, muscle, kidney, gastrointestinal and reproductive tract.

Its subcellular location is the cytoplasm. The protein localises to the nucleus. Functionally, inhibits the activity of dimeric NF-kappa-B/REL complexes by trapping REL (RELA/p65 and NFKB1/p50) dimers in the cytoplasm by masking their nuclear localization signals. On cellular stimulation by immune and pro-inflammatory responses, becomes phosphorylated promoting ubiquitination and degradation, enabling the dimeric RELA to translocate to the nucleus and activate transcription. The polypeptide is NF-kappa-B inhibitor alpha (Nfkbia) (Mus musculus (Mouse)).